The primary structure comprises 90 residues: uncharacterized protein (90 aa).

A helical transmembrane segment spans residues 32–52 (IIINLIPLVLLFAFFCPCIYF).

The protein localises to the membrane. This is an uncharacterized protein from Schizosaccharomyces pombe (strain 972 / ATCC 24843) (Fission yeast).